A 217-amino-acid chain; its full sequence is Cytidylate kinase (217 aa).

ATP is bound at residue 11-19 (GPAGAGKST).

This sequence belongs to the cytidylate kinase family. Type 1 subfamily.

It is found in the cytoplasm. It carries out the reaction CMP + ATP = CDP + ADP. The catalysed reaction is dCMP + ATP = dCDP + ADP. This is Cytidylate kinase from Clostridium perfringens (strain ATCC 13124 / DSM 756 / JCM 1290 / NCIMB 6125 / NCTC 8237 / Type A).